The chain runs to 466 residues: IQ domain-containing protein C (466 aa).

An IQ domain is found at 6-35; sequence LVRKVSALQACVRGFLVRRQFQSLRAEYEA. Disordered stretches follow at residues 105–157, 214–233, 238–310, and 394–466; these read KSGE…PHSQ, EQAC…DQSY, TGEL…QTFG, and VLDL…EPPG. Residues 132–153 are compositionally biased toward basic and acidic residues; that stretch reads PSQEKTRDTTRMENPEATDQRL. Positions 282–293 are enriched in polar residues; the sequence is GPPSSIPSNSQA. Residues 297 to 306 are compositionally biased toward basic and acidic residues; sequence RLTKGPDDGR. Phosphoserine is present on Ser-438.

This is IQ domain-containing protein C (IQCC) from Homo sapiens (Human).